We begin with the raw amino-acid sequence, 281 residues long: Probable endonuclease 4 (281 aa).

Residues His-69, His-109, Glu-145, Asp-179, His-182, His-216, Asp-229, His-231, and Glu-261 each contribute to the Zn(2+) site.

This sequence belongs to the AP endonuclease 2 family. Zn(2+) is required as a cofactor.

It carries out the reaction Endonucleolytic cleavage to 5'-phosphooligonucleotide end-products.. Endonuclease IV plays a role in DNA repair. It cleaves phosphodiester bonds at apurinic or apyrimidinic (AP) sites, generating a 3'-hydroxyl group and a 5'-terminal sugar phosphate. The protein is Probable endonuclease 4 of Aeromonas salmonicida (strain A449).